We begin with the raw amino-acid sequence, 206 residues long: Dephospho-CoA kinase (206 aa).

In terms of domain architecture, DPCK spans 6 to 206; that stretch reads IIGLTGGIAS…KWKWKDWSKK (201 aa). 14–19 is an ATP binding site; sequence ASGKST.

Belongs to the CoaE family.

Its subcellular location is the cytoplasm. The catalysed reaction is 3'-dephospho-CoA + ATP = ADP + CoA + H(+). It functions in the pathway cofactor biosynthesis; coenzyme A biosynthesis; CoA from (R)-pantothenate: step 5/5. Functionally, catalyzes the phosphorylation of the 3'-hydroxyl group of dephosphocoenzyme A to form coenzyme A. In Carboxydothermus hydrogenoformans (strain ATCC BAA-161 / DSM 6008 / Z-2901), this protein is Dephospho-CoA kinase.